Here is a 228-residue protein sequence, read N- to C-terminus: NOI-like protein (228 aa).

Basic and acidic residues predominate over residues 56–75; the sequence is AQDHQHSEKHHNDTSTDYHV. Disordered stretches follow at residues 56–87 and 99–133; these read AQDHQHSEKHHNDTSTDYHVVKQHRRKHHRRE and RPHRSPFQGVDMDSHRSRNHGTSATMSSSVKRNSD. A compositionally biased stretch (basic residues) spans 76-86; it reads VKQHRRKHHRR. Residues 118 to 133 are compositionally biased toward polar residues; that stretch reads HGTSATMSSSVKRNSD.

This sequence belongs to the RIN4 family.

The chain is NOI-like protein from Elaeis oleifera (American oil palm).